A 209-amino-acid chain; its full sequence is MSKVTQIAHPLILHKLTLIRDKNTGAKDFRELVEEVAMLMAYEVTRDFNLKEVEIETPICKTKSKVLAGKKVAIVPILRAGLGMVDGILKLIPAAKVGHIGLYRDEKTLTPVEYFCKLPQDIGEREIIVTDPMLATGGSAADAIALLKKRGAKYIRLVCLVAAPEGIKVVMDAHPDVDIYVASIDEKLDESGYIVPGLGDAGDRLFGTK.

Residues arginine 79, arginine 104, and 131–139 (DPMLATGGS) each bind 5-phospho-alpha-D-ribose 1-diphosphate. Uracil is bound by residues isoleucine 194 and 199–201 (GDA). Aspartate 200 contacts 5-phospho-alpha-D-ribose 1-diphosphate.

The protein belongs to the UPRTase family. Mg(2+) serves as cofactor.

The enzyme catalyses UMP + diphosphate = 5-phospho-alpha-D-ribose 1-diphosphate + uracil. It participates in pyrimidine metabolism; UMP biosynthesis via salvage pathway; UMP from uracil: step 1/1. Its activity is regulated as follows. Allosterically activated by GTP. Its function is as follows. Catalyzes the conversion of uracil and 5-phospho-alpha-D-ribose 1-diphosphate (PRPP) to UMP and diphosphate. This chain is Uracil phosphoribosyltransferase, found in Clostridium tetani (strain Massachusetts / E88).